A 294-amino-acid polypeptide reads, in one-letter code: Cutinase (294 aa).

Positions 1-33 (MLRARPSHRLASAAAVVAATGAALLAGSSPAAA) are cleaved as a signal peptide. A disulfide bridge links C36 with C107. S118 (nucleophile) is an active-site residue. A disulfide bond links C180 and C187. D184 is an active-site residue. Residue H198 is the Proton donor/acceptor of the active site. A disordered region spans residues 222–241 (GTPTTPTPTPTPTPVPTTCV). Pro residues predominate over residues 226–236 (TPTPTPTPTPV). Residues 240–294 (CVRDSTRDHVAADRAVSLYGRAYARGSRDSLGATSSYNVVSLQQVEGGWRLVTAC) form a may be involved in substrate binding region.

Belongs to the cutinase family.

Its subcellular location is the secreted. It catalyses the reaction cutin + H2O = cutin monomers.. The catalysed reaction is a tetradecanoate ester + H2O = an aliphatic alcohol + tetradecanoate + H(+). It carries out the reaction hexadecanoate ester + H2O = an aliphatic alcohol + hexadecanoate + H(+). The enzyme catalyses a butanoate ester + H2O = an aliphatic alcohol + butanoate + H(+). It catalyses the reaction an octanoate ester + H2O = an aliphatic alcohol + octanoate + H(+). Its function is as follows. Catalyzes the hydrolysis of cutin, a polyester that forms the structure of plant cuticle. Shows esterase activity towards p-nitrophenol-linked aliphatic esters (pNP-aliphatic esters). Can depolymerize synthetic polyesters such as poly(epsilon-caprolactone) (PCL) and poly(1,3-propylene adipate) (PPA). Exhibits some activity on poly(lactic acid) (PLA). Can bind but not hydrolyze poly(hydroxybutyrate) (PHB). The protein is Cutinase of Kineococcus radiotolerans (strain ATCC BAA-149 / DSM 14245 / SRS30216).